The primary structure comprises 488 residues: Malonate-semialdehyde dehydrogenase 2 (488 aa).

Positions 155, 179, 182, 183, and 232 each coordinate NAD(+). The active-site Nucleophile is the C287. E387 contacts NAD(+).

This sequence belongs to the aldehyde dehydrogenase family. IolA subfamily. In terms of assembly, homotetramer.

It carries out the reaction 3-oxopropanoate + NAD(+) + CoA + H2O = hydrogencarbonate + acetyl-CoA + NADH + H(+). The catalysed reaction is 2-methyl-3-oxopropanoate + NAD(+) + CoA + H2O = propanoyl-CoA + hydrogencarbonate + NADH + H(+). The protein operates within polyol metabolism; myo-inositol degradation into acetyl-CoA; acetyl-CoA from myo-inositol: step 7/7. Its function is as follows. Catalyzes the oxidation of malonate semialdehyde (MSA) and methylmalonate semialdehyde (MMSA) into acetyl-CoA and propanoyl-CoA, respectively. Is involved in a myo-inositol catabolic pathway. Bicarbonate, and not CO2, is the end-product of the enzymatic reaction. The chain is Malonate-semialdehyde dehydrogenase 2 from Bacillus cereus (strain ZK / E33L).